The chain runs to 350 residues: DNA polymerase IV (350 aa).

The region spanning 4–185 (IIHIDMDCFY…LPLGKLPGIG (182 aa)) is the UmuC domain. Asp-8 and Asp-103 together coordinate Mg(2+). Glu-104 is an active-site residue.

The protein belongs to the DNA polymerase type-Y family. Monomer. The cofactor is Mg(2+).

The protein localises to the cytoplasm. It catalyses the reaction DNA(n) + a 2'-deoxyribonucleoside 5'-triphosphate = DNA(n+1) + diphosphate. Poorly processive, error-prone DNA polymerase involved in untargeted mutagenesis. Copies undamaged DNA at stalled replication forks, which arise in vivo from mismatched or misaligned primer ends. These misaligned primers can be extended by PolIV. Exhibits no 3'-5' exonuclease (proofreading) activity. May be involved in translesional synthesis, in conjunction with the beta clamp from PolIII. The sequence is that of DNA polymerase IV from Aeromonas hydrophila subsp. hydrophila (strain ATCC 7966 / DSM 30187 / BCRC 13018 / CCUG 14551 / JCM 1027 / KCTC 2358 / NCIMB 9240 / NCTC 8049).